A 1728-amino-acid chain; its full sequence is Protein NETWORKED 1A (1728 aa).

An NAB domain is found at 13 to 92 (YSWWWDSHIP…ERYDHATVEL (80 aa)). Coiled-coil stretches lie at residues 155 to 446 (LGNS…LEIE), 476 to 827 (MLRD…QVEI), 857 to 885 (FSEK…EIDN), 954 to 1016 (QFQS…AELQ), 1090 to 1323 (EQAE…KETV), 1403 to 1431 (LLQD…LRRR), and 1576 to 1684 (RRLA…TKSK). The tract at residues 1419–1441 (AEEKKRRGKLRRRSSSHRSKDRK) is disordered. Basic residues predominate over residues 1424–1439 (RRGKLRRRSSSHRSKD).

This sequence belongs to the NET family. As to quaternary structure, interacts with F-actin. As to expression, expressed in root meristems and at very low levels throughout mature vasculature.

The protein resides in the cytoplasm. It is found in the cytoskeleton. The protein localises to the cell membrane. Its subcellular location is the cell junction. It localises to the plasmodesma. In terms of biological role, plant-specific actin binding protein. Associates with F-actin at the plasma membrane and plasmodesmata. May be part of a membrane-cytoskeletal adapter complex. The chain is Protein NETWORKED 1A from Arabidopsis thaliana (Mouse-ear cress).